The following is a 78-amino-acid chain: ATP synthase subunit c (78 aa).

A run of 2 helical transmembrane segments spans residues 12 to 32 and 54 to 74; these read IGAGLACTGMGGAAVGVGHVV and FIGIAFAEALGIFSFLVALLL.

It belongs to the ATPase C chain family. As to quaternary structure, F-type ATPases have 2 components, F(1) - the catalytic core - and F(0) - the membrane proton channel. F(1) has five subunits: alpha(3), beta(3), gamma(1), delta(1), epsilon(1). F(0) has four main subunits: a(1), b(1), b'(1) and c(10-14). The alpha and beta chains form an alternating ring which encloses part of the gamma chain. F(1) is attached to F(0) by a central stalk formed by the gamma and epsilon chains, while a peripheral stalk is formed by the delta, b and b' chains.

It is found in the cellular chromatophore membrane. In terms of biological role, f(1)F(0) ATP synthase produces ATP from ADP in the presence of a proton or sodium gradient. F-type ATPases consist of two structural domains, F(1) containing the extramembraneous catalytic core and F(0) containing the membrane proton channel, linked together by a central stalk and a peripheral stalk. During catalysis, ATP synthesis in the catalytic domain of F(1) is coupled via a rotary mechanism of the central stalk subunits to proton translocation. Key component of the F(0) channel; it plays a direct role in translocation across the membrane. A homomeric c-ring of between 10-14 subunits forms the central stalk rotor element with the F(1) delta and epsilon subunits. This is ATP synthase subunit c from Rhodobacter capsulatus (Rhodopseudomonas capsulata).